The primary structure comprises 232 residues: RNA chaperone ProQ (232 aa).

Positions 105-182 are disordered; that stretch reads EAKARVQAQR…REEQHTPVSD (78 aa). The segment covering 117–136 has biased composition (basic and acidic residues); sequence QQAKKREAAAAAGEKEDAPR. The span at 137 to 146 shows a compositional bias: basic residues; the sequence is RERKPRPTTP. The span at 147-177 shows a compositional bias: basic and acidic residues; the sequence is RRKEGAERKPRAQKSVEKAPKTVKAPREEQH.

It belongs to the ProQ family.

It is found in the cytoplasm. Its function is as follows. RNA chaperone with significant RNA binding, RNA strand exchange and RNA duplexing activities. May regulate ProP activity through an RNA-based, post-transcriptional mechanism. The sequence is that of RNA chaperone ProQ from Escherichia coli O7:K1 (strain IAI39 / ExPEC).